Reading from the N-terminus, the 689-residue chain is Elongation factor G (689 aa).

Residues 8–282 (LNTRNIGIMA…AVVDYLPSPL (275 aa)) enclose the tr-type G domain. GTP contacts are provided by residues 17-24 (AHIDAGKT), 81-85 (DTPGH), and 135-138 (NKMD).

It belongs to the TRAFAC class translation factor GTPase superfamily. Classic translation factor GTPase family. EF-G/EF-2 subfamily.

The protein localises to the cytoplasm. Its function is as follows. Catalyzes the GTP-dependent ribosomal translocation step during translation elongation. During this step, the ribosome changes from the pre-translocational (PRE) to the post-translocational (POST) state as the newly formed A-site-bound peptidyl-tRNA and P-site-bound deacylated tRNA move to the P and E sites, respectively. Catalyzes the coordinated movement of the two tRNA molecules, the mRNA and conformational changes in the ribosome. This Mycoplasma mycoides subsp. mycoides SC (strain CCUG 32753 / NCTC 10114 / PG1) protein is Elongation factor G.